The following is a 348-amino-acid chain: Calcium homeostasis modulator protein 1 (348 aa).

Topologically, residues 1–20 (MDKFRMIFQFLQSNQESFMN) are cytoplasmic. The segment at 9–36 (QFLQSNQESFMNGICGIMALASAQMYSA) is central pore. Residues 21-36 (GICGIMALASAQMYSA) form a helical membrane-spanning segment. At 37–48 (FDFNCPCLPGYN) the chain is on the extracellular side. 2 disulfide bridges follow: C41/C126 and C43/C160. The chain crosses the membrane as a helical span at residues 49–71 (VVYSLGILLTPPLVLFLLGLVMN). Residues 62–69 (VLFLLGLV) form a phospholipid-binding region. The Cytoplasmic segment spans residues 72 to 98 (NNISMLAEEWKRPAGRRAKDPAVLRYM). A helical transmembrane segment spans residues 99–124 (FCSMAQRALIAPVVWVAVTLLDGKCF). C100 is lipidated: S-palmitoyl cysteine. A phospholipid-binding region spans residues 104–116 (QRALIAPVVWVAV). Topologically, residues 125–179 (LCAFCTAVPVATLGNGSLVPGLPAPELARLLARVPCPEIYDGNWLLAREVAVRYL) are extracellular. N139 carries an N-linked (GlcNAc...) asparagine glycan. The helical transmembrane segment at 180–205 (RCISQALGWSFVLLTTLLAFVVRSVR) threads the bilayer. The tract at residues 191 to 201 (VLLTTLLAFVV) is phospholipid-binding. The Cytoplasmic portion of the chain corresponds to 206-348 (PCFTQVAFLK…KEVATYFSKV (143 aa)). The S-palmitoyl cysteine moiety is linked to residue C207. The segment at 324–348 (LMSNGWAGGEPRPPRKEVATYFSKV) is disordered.

This sequence belongs to the CALHM family. Oligomerizes to form hexamers and octamers. Does not form gap junctions. Associates with CALHM3 as a pore-forming subunit in a hetero-hexameric channel complex. N-glycosylated. Assembly with CALHM3 is associated with N-glycan remodeling and formation of hybrid complex- and high mannose-type glycochains. This N-glycan processing regulates channel trafficking and gating kinetics. In terms of processing, palmitoylated by ZDHHC3, ZDHHC20 and possibly ZDHHC7. Palmitoylation regulates voltage-dependent gating of the channel by shifting it toward more depolarized potentials. Specifically expressed in type II taste bud cells (at protein level). Not expressed in brain.

It is found in the cell membrane. The protein localises to the endoplasmic reticulum membrane. Its subcellular location is the basolateral cell membrane. It catalyses the reaction ATP(in) = ATP(out). It carries out the reaction Ca(2+)(in) = Ca(2+)(out). The enzyme catalyses Mg(2+)(in) = Mg(2+)(out). The catalysed reaction is Na(+)(in) = Na(+)(out). It catalyses the reaction K(+)(in) = K(+)(out). It carries out the reaction Li(+)(in) = Li(+)(out). The enzyme catalyses Rb(+)(in) = Rb(+)(out). The catalysed reaction is Cs(+)(in) = Cs(+)(out). It catalyses the reaction chloride(in) = chloride(out). Regulated by membrane voltage and extracellular Ca(2+). Inhibited by Gd(3+), ruthenium red, and Zn(2+) and partially inhibited by 2-aminoethoxydiphenyl borate. In terms of biological role, pore-forming subunit of gustatory voltage-gated ion channels required for sensory perception of sweet, bitter and umami tastes. With CALHM3 forms a fast-activating voltage-gated ATP-release channel in type II taste bud cells, ATP acting as a neurotransmitter to activate afferent neural gustatory pathways. Acts both as a voltage-gated and calcium-activated ion channel: mediates neuronal excitability in response to membrane depolarization and low extracellular Ca(2+) concentration. Has poor ion selectivity and forms a wide pore (around 14 Angstroms) that mediates permeation of small ions including Ca(2+), Na(+), K(+) and Cl(-), as well as larger ions such as ATP(4-). Mediates Ca(2+) influx and downstream activation of the ERK1 and ERK2 cascade in neurons. Triggers endoplasmic reticulum stress by reducing the calcium content of the endoplasmic reticulum. May indirectly control amyloid precursor protein (APP) proteolysis and aggregated amyloid-beta (Abeta) peptides levels in a Ca(2+) dependent manner. The polypeptide is Calcium homeostasis modulator protein 1 (Mus musculus (Mouse)).